The following is a 125-amino-acid chain: Small ribosomal subunit protein uS13 (125 aa).

Residues 94–125 form a disordered region; the sequence is SLPVRGQRTRTNARTRKGKRKTVAGKKKAVKK.

It belongs to the universal ribosomal protein uS13 family. In terms of assembly, part of the 30S ribosomal subunit. Forms a loose heterodimer with protein S19. Forms two bridges to the 50S subunit in the 70S ribosome.

Functionally, located at the top of the head of the 30S subunit, it contacts several helices of the 16S rRNA. In the 70S ribosome it contacts the 23S rRNA (bridge B1a) and protein L5 of the 50S subunit (bridge B1b), connecting the 2 subunits; these bridges are implicated in subunit movement. Contacts the tRNAs in the A and P-sites. The sequence is that of Small ribosomal subunit protein uS13 from Chlorobium chlorochromatii (strain CaD3).